Here is a 597-residue protein sequence, read N- to C-terminus: ATP-dependent lipid A-core flippase (597 aa).

The next 6 helical transmembrane spans lie at 26-46 (LWPY…AMAV), 76-96 (WFVP…QYAS), 138-158 (AIVF…VTLV), 164-184 (VVFL…IVAV), 263-283 (QPLT…IAVV), and 292-312 (VGGF…LKHL). Residues 38-321 (IGAIVAMAVS…LMDVNQPLQR (284 aa)) form the ABC transmembrane type-1 domain. The ABC transporter domain maps to 353–590 (VEFRDVSFVY…DGLYAHLHRI (238 aa)). ATP is bound at residue 390-397 (GPSGSGKT).

It belongs to the ABC transporter superfamily. Lipid exporter (TC 3.A.1.106) family. Homodimer.

The protein localises to the cell inner membrane. The enzyme catalyses ATP + H2O + lipid A-core oligosaccharideSide 1 = ADP + phosphate + lipid A-core oligosaccharideSide 2.. Its function is as follows. Involved in lipopolysaccharide (LPS) biosynthesis. Translocates lipid A-core from the inner to the outer leaflet of the inner membrane. Transmembrane domains (TMD) form a pore in the inner membrane and the ATP-binding domain (NBD) is responsible for energy generation. In Paraburkholderia xenovorans (strain LB400), this protein is ATP-dependent lipid A-core flippase.